A 601-amino-acid polypeptide reads, in one-letter code: 66 kDa stress protein (601 aa).

WD repeat units lie at residues 56-95 (EHAQ…HPLK), 100-143 (VLSG…GEIT), 145-184 (HSKA…FKHA), 187-226 (EHTR…KVGA), 233-272 (AHAL…LTTF), 318-357 (GHNK…AVPI), 435-478 (ASTT…LSEQ), 483-522 (GHRG…IKVE), 526-565 (YHNA…KHIA), and 569-600 (AHRG…WTIK).

Belongs to the WD repeat AIP1 family.

In terms of biological role, associated with the process of cyst formation. This Physarum polycephalum (Slime mold) protein is 66 kDa stress protein.